Consider the following 160-residue polypeptide: SsrA-binding protein (160 aa).

It belongs to the SmpB family.

It localises to the cytoplasm. In terms of biological role, required for rescue of stalled ribosomes mediated by trans-translation. Binds to transfer-messenger RNA (tmRNA), required for stable association of tmRNA with ribosomes. tmRNA and SmpB together mimic tRNA shape, replacing the anticodon stem-loop with SmpB. tmRNA is encoded by the ssrA gene; the 2 termini fold to resemble tRNA(Ala) and it encodes a 'tag peptide', a short internal open reading frame. During trans-translation Ala-aminoacylated tmRNA acts like a tRNA, entering the A-site of stalled ribosomes, displacing the stalled mRNA. The ribosome then switches to translate the ORF on the tmRNA; the nascent peptide is terminated with the 'tag peptide' encoded by the tmRNA and targeted for degradation. The ribosome is freed to recommence translation, which seems to be the essential function of trans-translation. This chain is SsrA-binding protein, found in Chloroflexus aurantiacus (strain ATCC 29364 / DSM 637 / Y-400-fl).